We begin with the raw amino-acid sequence, 259 residues long: Protein GrpE (259 aa).

2 disordered regions span residues 1-75 (MNSD…KGSD) and 227-259 (GPGPKAVNEEIPDQSASNQELSESVDGPTKDEN). Residues 20–40 (NNPSENFVSSSNSNESVNQVE) show a composition bias toward low complexity. Basic and acidic residues predominate over residues 46–60 (EVEHQVKNDSVDTAK). The span at 61–73 (EQSSTSCESNIKG) shows a compositional bias: polar residues.

This sequence belongs to the GrpE family. Homodimer.

Its subcellular location is the cytoplasm. Functionally, participates actively in the response to hyperosmotic and heat shock by preventing the aggregation of stress-denatured proteins, in association with DnaK and GrpE. It is the nucleotide exchange factor for DnaK and may function as a thermosensor. Unfolded proteins bind initially to DnaJ; upon interaction with the DnaJ-bound protein, DnaK hydrolyzes its bound ATP, resulting in the formation of a stable complex. GrpE releases ADP from DnaK; ATP binding to DnaK triggers the release of the substrate protein, thus completing the reaction cycle. Several rounds of ATP-dependent interactions between DnaJ, DnaK and GrpE are required for fully efficient folding. The chain is Protein GrpE from Prochlorococcus marinus (strain NATL1A).